A 196-amino-acid polypeptide reads, in one-letter code: Putative NADH dehydrogenase/NAD(P)H nitroreductase Smal_0358 (196 aa).

Belongs to the nitroreductase family. HadB/RutE subfamily. FMN serves as cofactor.

This is Putative NADH dehydrogenase/NAD(P)H nitroreductase Smal_0358 from Stenotrophomonas maltophilia (strain R551-3).